We begin with the raw amino-acid sequence, 290 residues long: GTPase Era (290 aa).

An Era-type G domain is found at 2 to 169; it reads KSGFAAILGR…KNKIYENFSE (168 aa). The G1 stretch occupies residues 10–17; the sequence is GRPSTGKS. 10–17 contributes to the GTP binding site; sequence GRPSTGKS. The segment at 36–40 is G2; it reads QTTRN. The tract at residues 57–60 is G3; that stretch reads DTPG. GTP contacts are provided by residues 57–61 and 119–122; these read DTPGF and NKVD. Residues 119–122 are G4; the sequence is NKVD. The tract at residues 148 to 150 is G5; that stretch reads ISA. The 77-residue stretch at 200–276 folds into the KH type-2 domain; it reads LKEELPYSLY…NLFLQVKLKK (77 aa).

It belongs to the TRAFAC class TrmE-Era-EngA-EngB-Septin-like GTPase superfamily. Era GTPase family. Monomer.

The protein resides in the cytoplasm. The protein localises to the cell inner membrane. An essential GTPase that binds both GDP and GTP, with rapid nucleotide exchange. Plays a role in 16S rRNA processing and 30S ribosomal subunit biogenesis and possibly also in cell cycle regulation and energy metabolism. This Borrelia garinii subsp. bavariensis (strain ATCC BAA-2496 / DSM 23469 / PBi) (Borreliella bavariensis) protein is GTPase Era.